A 500-amino-acid polypeptide reads, in one-letter code: Probable malate:quinone oxidoreductase (500 aa).

This sequence belongs to the MQO family. FAD serves as cofactor.

It carries out the reaction (S)-malate + a quinone = a quinol + oxaloacetate. Its pathway is carbohydrate metabolism; tricarboxylic acid cycle; oxaloacetate from (S)-malate (quinone route): step 1/1. This chain is Probable malate:quinone oxidoreductase, found in Bacillus cytotoxicus (strain DSM 22905 / CIP 110041 / 391-98 / NVH 391-98).